A 336-amino-acid polypeptide reads, in one-letter code: Probable ADP-ribosylation factor GTPase-activating protein AGD13 (336 aa).

The Arf-GAP domain maps to 15 to 137 (KRRIRDLLNQ…EFLKPSLRIT (123 aa)). Residues 30-53 (CADCGASDPKWASANIGVFICLKC) form a C4-type zinc finger. The C2 domain occupies 162–280 (RTNSSSQTMF…AMAFGDPEMF (119 aa)). Ca(2+) is bound by residues Asp249, Ser252, and Asp255.

Ca(2+) is required as a cofactor.

GTPase-activating protein (GAP) for ADP ribosylation factor (ARF). The polypeptide is Probable ADP-ribosylation factor GTPase-activating protein AGD13 (AGD13) (Arabidopsis thaliana (Mouse-ear cress)).